The primary structure comprises 468 residues: Sorting and assembly machinery component 50 homolog B (468 aa).

Residues 1-25 (MGTVHARSLDPLPMNGPDFGSPDDA) form a disordered region. Residues 44-124 (VVVQRVHFEG…LDVTFEVTEL (81 aa)) form the POTRA domain.

It belongs to the SAM50/omp85 family. Associates with the mitochondrial contact site and cristae organizing system (MICOS) complex (also known as MINOS or MitOS complex).

It is found in the mitochondrion outer membrane. May play a role in the maintenance of the structure of mitochondrial cristae. The sequence is that of Sorting and assembly machinery component 50 homolog B (samm50-b) from Xenopus laevis (African clawed frog).